The primary structure comprises 351 residues: S-adenosylmethionine:tRNA ribosyltransferase-isomerase (351 aa).

This sequence belongs to the QueA family. Monomer.

The protein resides in the cytoplasm. The enzyme catalyses 7-aminomethyl-7-carbaguanosine(34) in tRNA + S-adenosyl-L-methionine = epoxyqueuosine(34) in tRNA + adenine + L-methionine + 2 H(+). Its pathway is tRNA modification; tRNA-queuosine biosynthesis. In terms of biological role, transfers and isomerizes the ribose moiety from AdoMet to the 7-aminomethyl group of 7-deazaguanine (preQ1-tRNA) to give epoxyqueuosine (oQ-tRNA). In Hyphomonas neptunium (strain ATCC 15444), this protein is S-adenosylmethionine:tRNA ribosyltransferase-isomerase.